A 367-amino-acid polypeptide reads, in one-letter code: MATAAASDLESKAKAAFVDDDFELAAELYTQAIEASPATAELYADRAQAHIKLGNYTEAVADANKAIELDPSMHKAYLRKGAACIRLEEYQTAKAALELGYSFASGDSRFTRLMKECDERIAEELSEVPVKKAEDGAAAPSVASFVEEKDDAANMDNTPPMVEVKPKYRHDFYNSATEVVLTIFAKGVPAENVVVDFGEQMLSVSIEVPGEEPYHFQPRLFSKIIPEKSRYQVLSTKVEIRLAKAEQITWTSLDYDKKPKAVPQKIIPPAESAQRPSYPSSKSKKDWDKLEAEVKKEEKEEKLEGDAALNKFFRDIYSDADEDMRRAMMKSFVESNGTVLSTNWKDVGSKKVEGSPPDGMELKKWEY.

TPR repeat units follow at residues 6-39, 40-73, and 75-107; these read ASDL…SPAT, AELY…DPSM, and KAYL…ASGD. Residues 165 to 254 enclose the CS domain; it reads KPKYRHDFYN…AEQITWTSLD (90 aa). 2 disordered regions span residues 261-289 and 347-367; these read AVPQ…DWDK and VGSK…KWEY. Residues 277-367 form the SGS domain; that stretch reads SYPSSKSKKD…DGMELKKWEY (91 aa).

The protein belongs to the SGT1 family. Interacts (via CS domain) with RAR1 (via CHORD 2 domain). Interacts with RAD6. In terms of tissue distribution, expressed in roots, root tips, shoot apical meristem (SAM), young leaves, flag leaves and ears.

It is found in the cytoplasm. The protein localises to the nucleus. Functionally, involved in basal disease resistance to bacterial blight (X.oryzae). May act as positive regulator of basal defense. Probably required for SCF-mediated ubiquitination, by coupling HSP90 to SCF complex for ubiquitination of HSP90 client proteins. The chain is Protein SGT1 homolog from Oryza sativa subsp. japonica (Rice).